A 491-amino-acid polypeptide reads, in one-letter code: Glutamine synthetase (491 aa).

The 89-residue stretch at 23–111 (NNVRQVLCAF…MFGNVYEAWG (89 aa)) folds into the GS beta-grasp domain. The 373-residue stretch at 119–491 (PRGYVAKRYE…PWEFMKYFDI (373 aa)) folds into the GS catalytic domain. Mg(2+) is bound by residues Glu-143 and Glu-145. An ATP-binding site is contributed by Glu-225. The Mg(2+) site is built by Glu-230 and Glu-238. L-glutamate-binding positions include 282–283 (NA) and Ala-283. His-287 contributes to the Mg(2+) binding site. ATP contacts are provided by residues 289-291 (HQS) and Ser-291. Residues Arg-344, Glu-350, and Arg-362 each coordinate L-glutamate. 2 residues coordinate ATP: Arg-362 and Arg-367. Glu-381 contributes to the Mg(2+) binding site. Residue Arg-383 participates in L-glutamate binding.

Belongs to the glutamine synthetase family. In terms of assembly, oligomer of 12 subunits arranged in the form of two hexagons. Mg(2+) is required as a cofactor.

Its subcellular location is the cytoplasm. The catalysed reaction is L-glutamate + NH4(+) + ATP = L-glutamine + ADP + phosphate + H(+). Its function is as follows. Probably involved in nitrogen metabolism via ammonium assimilation. Catalyzes the ATP-dependent biosynthesis of glutamine from glutamate and ammonia. Beta-glutamate is a much poorer substrate than alpha-glutamate. The polypeptide is Glutamine synthetase (Archaeoglobus fulgidus (strain ATCC 49558 / DSM 4304 / JCM 9628 / NBRC 100126 / VC-16)).